The following is a 469-amino-acid chain: 3-isopropylmalate dehydratase large subunit (469 aa).

[4Fe-4S] cluster is bound by residues Cys347, Cys410, and Cys413.

This sequence belongs to the aconitase/IPM isomerase family. LeuC type 1 subfamily. Heterodimer of LeuC and LeuD. [4Fe-4S] cluster is required as a cofactor.

It carries out the reaction (2R,3S)-3-isopropylmalate = (2S)-2-isopropylmalate. The protein operates within amino-acid biosynthesis; L-leucine biosynthesis; L-leucine from 3-methyl-2-oxobutanoate: step 2/4. Its function is as follows. Catalyzes the isomerization between 2-isopropylmalate and 3-isopropylmalate, via the formation of 2-isopropylmaleate. The sequence is that of 3-isopropylmalate dehydratase large subunit from Burkholderia orbicola (strain MC0-3).